A 574-amino-acid polypeptide reads, in one-letter code: Putative diflavin flavoprotein A 3 (574 aa).

The interval 43–236 (QNGTTYNSFL…PSVKMIATGH (194 aa)) is zinc metallo-hydrolase. The Fe cation site is built by His92, Glu94, Asp96, His159, Asp178, and His236. The region spanning 265–409 (IGVFYVSEYG…DLGQWVTRDR (145 aa)) is the Flavodoxin-like domain. Residues 410-574 (SIKAMKSLGA…VHHRKVGNHY (165 aa)) form a flavodoxin-reductase-like region.

In the N-terminal section; belongs to the zinc metallo-hydrolase group 3 family. This sequence in the C-terminal section; belongs to the flavodoxin reductase family. The cofactor is Fe cation.

Mediates electron transfer from NADH to oxygen, reducing it to water. This modular protein has 3 redox cofactors, in other organisms the same activity requires 2 or 3 proteins. The chain is Putative diflavin flavoprotein A 3 (dfa3) from Nostoc sp. (strain PCC 7120 / SAG 25.82 / UTEX 2576).